The primary structure comprises 284 residues: Pantothenate synthetase (284 aa).

An ATP-binding site is contributed by 30–37; sequence MGNLHDGH. The active-site Proton donor is histidine 37. Glutamine 61 is a (R)-pantoate binding site. Beta-alanine is bound at residue glutamine 61. 149–152 lines the ATP pocket; sequence GEKD. Glutamine 155 lines the (R)-pantoate pocket. ATP contacts are provided by residues isoleucine 178 and 186–189; that span reads LSSR.

It belongs to the pantothenate synthetase family. Homodimer.

Its subcellular location is the cytoplasm. It carries out the reaction (R)-pantoate + beta-alanine + ATP = (R)-pantothenate + AMP + diphosphate + H(+). Its pathway is cofactor biosynthesis; (R)-pantothenate biosynthesis; (R)-pantothenate from (R)-pantoate and beta-alanine: step 1/1. In terms of biological role, catalyzes the condensation of pantoate with beta-alanine in an ATP-dependent reaction via a pantoyl-adenylate intermediate. The sequence is that of Pantothenate synthetase from Salmonella newport (strain SL254).